The chain runs to 192 residues: uncharacterized protein (192 aa).

In terms of domain architecture, Nudix hydrolase spans 29–160 (HRQAAVLIPI…PLDIYRRGDS (132 aa)). The Nudix box signature appears at 67–89 (GAVDDTDASVIAAALREAEEEVA). The Mg(2+) site is built by glutamate 83 and glutamate 87.

Belongs to the Nudix hydrolase family. PCD1 subfamily. The cofactor is Mn(2+). Mg(2+) serves as cofactor.

In terms of biological role, probably mediates the hydrolysis of some nucleoside diphosphate derivatives. This is an uncharacterized protein from Escherichia coli (strain SE11).